A 504-amino-acid polypeptide reads, in one-letter code: Maturase K (504 aa).

The protein belongs to the intron maturase 2 family. MatK subfamily.

Its subcellular location is the plastid. The protein localises to the chloroplast. Usually encoded in the trnK tRNA gene intron. Probably assists in splicing its own and other chloroplast group II introns. The chain is Maturase K from Taxus baccata (English yew).